The primary structure comprises 1594 residues: Transcription factor Gibbin (1594 aa).

Disordered stretches follow at residues 19–111, 149–241, 256–307, and 367–464; these read PDYL…RHWD, LRLS…LADA, QLLE…DPLG, and CSPH…RKGK. Residues 30-47 show a composition bias toward pro residues; it reads GGPPTPRPLLPTRPPASP. Position 79 is an N6-acetyllysine (Lys79). Residues 165–177 are compositionally biased toward polar residues; it reads SFFSSPSLANSIR. Residues 178 to 193 show a composition bias toward basic and acidic residues; it reads SPEERANPHTKSERPS. The span at 228–240 shows a compositional bias: acidic residues; it reads PEPDGPDYSELAD. Phosphoserine is present on Ser267. Over residues 272 to 303 the composition is skewed to low complexity; sequence PQLLDPQPRFLDPQALEPLGEGLELPPLQPLA. Residues 391–401 are compositionally biased toward basic residues; that stretch reads ILCRRRKAGRG. The segment at residues 395–407 is a DNA-binding region (a.T hook 1); sequence RRKAGRGRKADSG. The span at 427–447 shows a compositional bias: pro residues; sequence EPPPLPPPPPPTLSGPGPVPE. The a.T hook 2 DNA-binding region spans 541–553; the sequence is KRKRGRPPKNLLL. The tract at residues 578 to 604 is disordered; it reads MPEVKKRRRRKQKLASPQPSYAADAND. Ser593 carries the post-translational modification Phosphoserine. A Glycyl lysine isopeptide (Lys-Gly) (interchain with G-Cter in SUMO2) cross-link involves residue Lys606. Residues 714-789 form a disordered region; it reads LTELGHPRKR…PGGQAGRNCG (76 aa). Residues 734–743 show a composition bias toward basic residues; it reads KPKRKRRSRK. Ser825 and Ser842 each carry phosphoserine. The residue at position 887 (Arg887) is an Omega-N-methylarginine. A Phosphoserine modification is found at Ser892. Residues 942–967 form a disordered region; the sequence is KLAPPPSAVARSPTTHPPANTYPPQY. Phosphoserine is present on Ser1060. Disordered regions lie at residues 1152-1191 and 1245-1306; these read VSET…QSSL and STSA…PDLG. 3 stretches are compositionally biased toward low complexity: residues 1153-1168, 1180-1191, and 1245-1264; these read SETF…QFSQ, SEASSSEGQSSL, and STSA…PRQP. Ser1180 carries the post-translational modification Phosphoserine. Phosphoserine is present on residues Ser1315, Ser1317, and Ser1392. Thr1394 is modified (phosphothreonine). Ser1396 is modified (phosphoserine). Residue Lys1402 forms a Glycyl lysine isopeptide (Lys-Gly) (interchain with G-Cter in SUMO2) linkage. The segment at 1495 to 1525 is disordered; the sequence is HLASPPATPKADKEPLEMARPPGPPRGPAAA. Phosphoserine is present on residues Ser1498 and Ser1540.

Its subcellular location is the nucleus. The protein localises to the chromosome. Functionally, transcription factor required for the proper patterning of the epidermis, which plays a key role in early epithelial morphogenesis. Directly binds promoter and enhancer regions and acts by maintaining local enhancer-promoter chromatin architecture. Interacts with many sequence-specific zinc-finger transcription factors and methyl-CpG-binding proteins to regulate the expression of mesoderm genes that wire surface ectoderm stratification. This chain is Transcription factor Gibbin, found in Mus musculus (Mouse).